The primary structure comprises 186 residues: Glutathione peroxidase 7 (186 aa).

Residues 1-18 (MVAARAAAWLLLAAAACA) form the signal peptide. Cysteine 56 is an active-site residue.

Belongs to the glutathione peroxidase family.

It localises to the secreted. It catalyses the reaction 2 glutathione + H2O2 = glutathione disulfide + 2 H2O. The chain is Glutathione peroxidase 7 (GPX7) from Bos taurus (Bovine).